Here is an 837-residue protein sequence, read N- to C-terminus: Zinc fingers and homeoboxes protein 2 (837 aa).

The tract at residues 27 to 77 is interaction with EFNB1; it reads VDRAKEKGIGTPQPDVAKDSWAAELENSSKENEVIEVKSMGESQSKKLQGG. At Thr37 the chain carries Phosphothreonine. A Glycyl lysine isopeptide (Lys-Gly) (interchain with G-Cter in SUMO2) cross-link involves residue Lys64. C2H2-type zinc fingers lie at residues 78–101 and 110–133; these read YECKYCPYSTQNLNEFTEHVDMQH and YVCAECNFTTKKYDSLSDHNSKFH. Positions 164–180 are enriched in low complexity; the sequence is SITTSGPGTGDSDSGIS. The segment at 164-204 is disordered; that stretch reads SITTSGPGTGDSDSGISVSKTPIMKPGKPKADAKKVPKKPE. The span at 192–204 shows a compositional bias: basic and acidic residues; the sequence is PKADAKKVPKKPE. The required for homodimerization stretch occupies residues 195–358; that stretch reads DAKKVPKKPE…PAQLAPTKVT (164 aa). Thr207 is modified (phosphothreonine). 4 DNA-binding regions (homeobox) span residues 263–324, 439–501, 530–591, and 628–690; these read NTTK…WSPE, TPAS…IVHI, PQKF…EQAV, and SPSP…TVKW. The tract at residues 263–446 is required for repressor activity; that stretch reads NTTKYNSALD…PLTPASDRKK (184 aa). A required for interaction with NFYA region spans residues 263 to 497; it reads NTTKYNSALD…SDHRYRCQRG (235 aa). Residues 317-446 form a required for nuclear localization region; that stretch reads HGISWSPEEV…PLTPASDRKK (130 aa). The tract at residues 404-445 is disordered; the sequence is GQKRPLVTPQAAPEPKRPHIAQVPEPPPKVANPPLTPASDRK. Residues 427 to 439 show a composition bias toward pro residues; it reads PEPPPKVANPPLT. Lys455 is covalently cross-linked (Glycyl lysine isopeptide (Lys-Gly) (interchain with G-Cter in SUMO2)). The tract at residues 755-837 is disordered; sequence PAKDCLPAKP…DCVPAEAGQA (83 aa). A phosphoserine mark is found at Ser825 and Ser827.

It belongs to the ZHX family. As to quaternary structure, homodimer (via homeobox domain). Heterodimer with ZHX1 (via homeobox domain 1). Heterodimer with ZHX3 (via homeobox domain 1). Heterodimerization with ZHX1 is not necessary for repressor activity. Interacts (via homeobox domain) with NFYA (via N-terminus). Interacts with EFNB1 intracellular domain peptide; the interaction enhances ZHX2 transcriptional repression activity. As to expression, ubiquitously expressed. Expressed in podocytes.

The protein resides in the nucleus. Its function is as follows. Acts as a transcriptional repressor. Represses the promoter activity of the CDC25C gene stimulated by NFYA. May play a role in retinal development where it regulates the composition of bipolar cell populations, by promoting differentiation of bipolar OFF-type cells. In the brain, may promote maintenance and suppress differentiation of neural progenitor cells in the developing cortex. The protein is Zinc fingers and homeoboxes protein 2 (ZHX2) of Homo sapiens (Human).